A 428-amino-acid chain; its full sequence is MSAIVDIIGREILDSRGNPTVECDVLLESGAMGRAAVPSGASTGEREAIELRDGDKSRYLGKGVLRAVENLNTEISEALMGLDAQEQTFVDRTLIELDGTDTKERLGANALLAASMAVARAAADESGLSLYRYFGGSGPMSMPVPMMNVINGGAHANNTLDLQELMILPVGATSFREALRWGAEVFHALKKLIHGQGMSTAVGDEGGFAPNVPNHEAAIQLILKAIAEAGYEPGSQIALGLDCASSEFYRDGKYTLAGEGGLSLSSQEFANLLATWCDKYPIISIEDGMAENDWEGWKLLTDQLGKKVQLVGDDLFVTNTRILKEGIQKGVANSILIKINQIGTLTETFAAIEMAKRAGYTAVVSHRSGETEDSTIADIAVATNAMQIKTGSLSRSDRMAKYNQLLRIEEELAEVASYPGLDAFYNLR.

Glutamine 163 provides a ligand contact to (2R)-2-phosphoglycerate. The active-site Proton donor is glutamate 205. Positions 242, 286, and 313 each coordinate Mg(2+). Positions 338, 367, 368, and 389 each coordinate (2R)-2-phosphoglycerate. Lysine 338 functions as the Proton acceptor in the catalytic mechanism.

This sequence belongs to the enolase family. Mg(2+) is required as a cofactor.

The protein localises to the cytoplasm. It is found in the secreted. The protein resides in the cell surface. It catalyses the reaction (2R)-2-phosphoglycerate = phosphoenolpyruvate + H2O. The protein operates within carbohydrate degradation; glycolysis; pyruvate from D-glyceraldehyde 3-phosphate: step 4/5. In terms of biological role, catalyzes the reversible conversion of 2-phosphoglycerate (2-PG) into phosphoenolpyruvate (PEP). It is essential for the degradation of carbohydrates via glycolysis. This chain is Enolase, found in Bordetella petrii (strain ATCC BAA-461 / DSM 12804 / CCUG 43448).